Here is a 736-residue protein sequence, read N- to C-terminus: Transcription factor E2F8 (736 aa).

The interval 1–26 (MEEGSKENCGFNGSPMGSRSPPKQLT) is disordered. The segment covering 15–26 (PMGSRSPPKQLT) has biased composition (polar residues). DNA-binding regions lie at residues 98–167 (RKEK…IWHG) and 240–326 (RKEK…QWTC). 4 disordered regions span residues 386–405 (RRKI…GSSS), 435–456 (SACK…QTPT), 483–551 (EQTL…AVDD), and 716–736 (PGGM…GTDD). Residues 393–405 (PSSPIKSGDGSSS) show a composition bias toward low complexity. Basic and acidic residues-rich tracts occupy residues 509-539 (GRHE…DRGC) and 726-736 (SARKLDVGTDD).

The protein belongs to the E2F/DP family. In terms of assembly, homodimer and heterodimer: mainly forms homodimers and, to a lesser extent, heterodimers with e2f7.

It is found in the nucleus. Its function is as follows. Atypical E2F transcription factor that participates in various processes such as angiogenesis and polyploidization of specialized cells. Mainly acts as a transcription repressor that binds DNA independently of DP proteins and specifically recognizes the E2 recognition site 5'-TTTC[CG]CGC-3'. Directly represses transcription of classical E2F transcription factors such as e2f1. Acts as a regulator of S-phase by recognizing and binding the E2-related site 5'-TTCCCGCC-3' and mediating repression of G1/S-regulated genes. Acts as a promoter of sprouting angiogenesis, possibly by acting as a transcription activator. The chain is Transcription factor E2F8 (e2f8) from Xenopus tropicalis (Western clawed frog).